The sequence spans 239 residues: Ribonuclease 3 (239 aa).

An RNase III domain is found at 18–141; it reads YTTLEKALGY…LMAGVYLEAG (124 aa). Glu-54 provides a ligand contact to Mg(2+). Asp-58 is an active-site residue. Ser-127 and Glu-130 together coordinate Mg(2+). Glu-130 is a catalytic residue. Residues 168-237 form the DRBM domain; the sequence is DYKTALQELT…AYYALQKLKE (70 aa).

This sequence belongs to the ribonuclease III family. Homodimer. It depends on Mg(2+) as a cofactor.

The protein localises to the cytoplasm. It catalyses the reaction Endonucleolytic cleavage to 5'-phosphomonoester.. Digests double-stranded RNA. Involved in the processing of primary rRNA transcript to yield the immediate precursors to the large and small rRNAs (23S and 16S). Processes some mRNAs, and tRNAs when they are encoded in the rRNA operon. Processes pre-crRNA and tracrRNA of type II CRISPR loci if present in the organism. The protein is Ribonuclease 3 of Helicobacter pylori (strain G27).